The sequence spans 873 residues: Ectonucleotide pyrophosphatase/phosphodiesterase family member 3 (873 aa).

The Cytoplasmic portion of the chain corresponds to 1 to 11 (MESMLTLAMEQ). The helical; Signal-anchor for type II membrane protein transmembrane segment at 12-30 (PVKRNTLKKYKIACIVLLA) threads the bilayer. Topologically, residues 31 to 873 (LLVIVSLGLG…TYLPTFETTI (843 aa)) are extracellular. SMB domains follow at residues 51–93 (QGSC…VEST) and 94–138 (RIWM…GETS). 10 cysteine pairs are disulfide-bonded: Cys54-Cys71, Cys58-Cys89, Cys69-Cys82, Cys75-Cys81, Cys98-Cys115, Cys103-Cys133, Cys113-Cys126, Cys119-Cys125, Cys144-Cys190, and Cys152-Cys364. The Cell attachment site motif lies at 78–80 (RGD). Positions 160–544 (PVILFSMDGF…HGSLNHLLKV (385 aa)) are phosphodiesterase. Residue Asp167 participates in Zn(2+) binding. Residue Lys204 coordinates ATP. Zn(2+) is bound at residue Thr205. The Nucleophile role is filled by Thr205. Asn226 serves as a coordination point for ATP. Asn236 carries N-linked (GlcNAc...) asparagine glycosylation. Glu275 is an ATP binding site. The N-linked (GlcNAc...) asparagine glycan is linked to Asn279. Tyr289 provides a ligand contact to ATP. Asn290 carries an N-linked (GlcNAc...) asparagine glycan. Asp325, His329, Asp372, and His373 together coordinate Zn(2+). 6 cysteine pairs are disulfide-bonded: Cys380–Cys477, Cys428–Cys816, Cys561–Cys621, Cys573–Cys677, Cys575–Cys662, and Cys785–Cys795. Asn425 carries N-linked (GlcNAc...) asparagine glycosylation. His482 is a Zn(2+) binding site. Asn532, Asn592, Asn685, and Asn697 each carry an N-linked (GlcNAc...) asparagine glycan. A nuclease region spans residues 580-873 (NSIQLEQVNQ…TYLPTFETTI (294 aa)). Positions 750, 752, 754, 756, and 758 each coordinate Ca(2+). Asn787 is a glycosylation site (N-linked (GlcNAc...) asparagine).

As to quaternary structure, monomer and homodimer. It depends on Zn(2+) as a cofactor. N-glycosylated. N-glycosylation is necessary for normal transport to the cell membrane, but is not the apical targeting signal.

The protein localises to the cell membrane. Its subcellular location is the apical cell membrane. It is found in the secreted. The enzyme catalyses a ribonucleoside 5'-triphosphate + H2O = a ribonucleoside 5'-phosphate + diphosphate + H(+). It carries out the reaction ATP + H2O = AMP + diphosphate + H(+). It catalyses the reaction CTP + H2O = CMP + diphosphate + H(+). The catalysed reaction is GTP + H2O = GMP + diphosphate + H(+). The enzyme catalyses UTP + H2O = UMP + diphosphate + H(+). It carries out the reaction UDP-N-acetyl-alpha-D-glucosamine + H2O = N-acetyl-alpha-D-glucosamine 1-phosphate + UMP + 2 H(+). It catalyses the reaction P(1),P(3)-bis(5'-adenosyl) triphosphate + H2O = AMP + ADP + 2 H(+). The catalysed reaction is P(1),P(4)-bis(5'-adenosyl) tetraphosphate + H2O = AMP + ATP + 2 H(+). The enzyme catalyses P(1),P(5)-bis(5'-adenosyl) pentaphosphate + H2O = adenosine 5'-tetraphosphate + AMP + 2 H(+). It carries out the reaction P(1),P(4)-bis(5'-guanosyl) tetraphosphate + H2O = GMP + GTP + 2 H(+). It catalyses the reaction Hydrolytically removes 5'-nucleotides successively from the 3'-hydroxy termini of 3'-hydroxy-terminated oligonucleotides.. Functionally, hydrolase that metabolizes extracellular nucleotides, including ATP, GTP, UTP and CTP. Limits mast cells and basophils response during inflammation and during the chronic phases of allergic responses by eliminating extracellular ATP, a signaling molecule activating these cells in an autocrine manner. Metabolizes extracellular ATP in the lumen of the small intestine, and thereby prevents ATP-induced apoptosis of intestinal plasmacytoid dendritic cells. Has a broad specificity and can also hydrolyze UDP-GlcNAc into UMP and GlcNAc-1-phosphate and potentially several other intracellular nucleotide sugars, including UDP-GalNAc, CMP-NeuAc, GDP-Fuc, and UDP-GlcA. Thereby, could modulate glycan biosynthesis and protein glycosylation. Can hydrolyze extracellular dinucleoside polyphosphates, including the vasoactive adenosine polyphosphates as well. In addition, displays an alkaline phosphodiesterase activity in vitro. The sequence is that of Ectonucleotide pyrophosphatase/phosphodiesterase family member 3 from Pongo abelii (Sumatran orangutan).